Reading from the N-terminus, the 94-residue chain is YcgL domain-containing protein VP0875 (94 aa).

The YcgL domain occupies 1–84 (MLCSIYKSSK…PPENLLEKYK (84 aa)).

The chain is YcgL domain-containing protein VP0875 from Vibrio parahaemolyticus serotype O3:K6 (strain RIMD 2210633).